We begin with the raw amino-acid sequence, 301 residues long: Phosphatidylglycerol--prolipoprotein diacylglyceryl transferase (301 aa).

4 consecutive transmembrane segments (helical) span residues isoleucine 10–phenylalanine 30, leucine 57–tyrosine 77, valine 92–tryptophan 112, and leucine 119–glycine 139. Arginine 140 lines the a 1,2-diacyl-sn-glycero-3-phospho-(1'-sn-glycerol) pocket. 3 helical membrane passes run proline 202–phenylalanine 222, tyrosine 230–valine 250, and leucine 264–leucine 284.

This sequence belongs to the Lgt family.

The protein localises to the cell inner membrane. The enzyme catalyses L-cysteinyl-[prolipoprotein] + a 1,2-diacyl-sn-glycero-3-phospho-(1'-sn-glycerol) = an S-1,2-diacyl-sn-glyceryl-L-cysteinyl-[prolipoprotein] + sn-glycerol 1-phosphate + H(+). It functions in the pathway protein modification; lipoprotein biosynthesis (diacylglyceryl transfer). Its function is as follows. Catalyzes the transfer of the diacylglyceryl group from phosphatidylglycerol to the sulfhydryl group of the N-terminal cysteine of a prolipoprotein, the first step in the formation of mature lipoproteins. The sequence is that of Phosphatidylglycerol--prolipoprotein diacylglyceryl transferase from Xylella fastidiosa (strain 9a5c).